The sequence spans 98 residues: NADH-ubiquinone oxidoreductase chain 4L (98 aa).

3 helical membrane passes run 1-21 (MPSI…GMLV), 29-49 (SLLC…LTAL), and 61-81 (IILL…LVMV).

The protein belongs to the complex I subunit 4L family. Core subunit of respiratory chain NADH dehydrogenase (Complex I) which is composed of 45 different subunits.

The protein localises to the mitochondrion inner membrane. The catalysed reaction is a ubiquinone + NADH + 5 H(+)(in) = a ubiquinol + NAD(+) + 4 H(+)(out). Its function is as follows. Core subunit of the mitochondrial membrane respiratory chain NADH dehydrogenase (Complex I) which catalyzes electron transfer from NADH through the respiratory chain, using ubiquinone as an electron acceptor. Part of the enzyme membrane arm which is embedded in the lipid bilayer and involved in proton translocation. The polypeptide is NADH-ubiquinone oxidoreductase chain 4L (MT-ND4L) (Oryctolagus cuniculus (Rabbit)).